Here is a 157-residue protein sequence, read N- to C-terminus: Nascent polypeptide-associated complex subunit beta (157 aa).

A disordered region spans residues 1–28 (MPVDPEKLAKLQKSSAKKVGGSRVKAKK). Residues 33–98 (EQDDTKLIEA…PQEKNITQLI (66 aa)) form the NAC-A/B domain. Residues 124-157 (KTPKDFNTGSANAAADAGGEDIPDLVDQKFDDVE) are disordered.

Belongs to the NAC-beta family. In terms of assembly, part of the nascent polypeptide-associated complex (NAC), consisting of EGD2 and EGD1. NAC associates with ribosomes via EGD1.

It is found in the cytoplasm. The protein localises to the nucleus. Its function is as follows. Component of the nascent polypeptide-associated complex (NAC), a dynamic component of the ribosomal exit tunnel, protecting the emerging polypeptides from interaction with other cytoplasmic proteins to ensure appropriate nascent protein targeting. The NAC complex also promotes mitochondrial protein import by enhancing productive ribosome interactions with the outer mitochondrial membrane and blocks the inappropriate interaction of ribosomes translating non-secretory nascent polypeptides with translocation sites in the membrane of the endoplasmic reticulum. EGD1 may act as a transcription factor that exert a negative effect on the expression of several genes that are transcribed by RNA polymerase II. The polypeptide is Nascent polypeptide-associated complex subunit beta (EGD1) (Candida albicans (strain SC5314 / ATCC MYA-2876) (Yeast)).